We begin with the raw amino-acid sequence, 311 residues long: N-acetylmuramic acid 6-phosphate etherase (311 aa).

An SIS domain is found at 66–230 (VVEAFEADGR…TTAAMVRLGK (165 aa)). E94 serves as the catalytic Proton donor. E125 is an active-site residue.

This sequence belongs to the GCKR-like family. MurNAc-6-P etherase subfamily. Homodimer.

It catalyses the reaction N-acetyl-D-muramate 6-phosphate + H2O = N-acetyl-D-glucosamine 6-phosphate + (R)-lactate. Its pathway is amino-sugar metabolism; N-acetylmuramate degradation. Specifically catalyzes the cleavage of the D-lactyl ether substituent of MurNAc 6-phosphate, producing GlcNAc 6-phosphate and D-lactate. The sequence is that of N-acetylmuramic acid 6-phosphate etherase from Salinibacter ruber (strain DSM 13855 / M31).